A 289-amino-acid chain; its full sequence is MLVHPQIDPIAIQLGPLAVRWYGLMYLLGFACFILLGRYRIKRNPEGAFTISMLDDMLFYGVLGVIVGGRLGHIFFYQFGYYLEHPLEIFAVWQGGMSFHGGFLGVIAAMALLARKYHLRWLVVTDFIAPLVPLGLGAGRIGNFINAELWGRPTDVPWGMIFPYVDNIPRHPSQLYEFALEGLAFFTLMWIYSARPRPVGAVSGMFLIGYGVFRSFAEFFREPDEGFMGMMTLGISMGQWLSLPMILAGVIMLVWAYRTQAPVSARGKAGKAGKAANAVVAGKRGSKER.

Helical transmembrane passes span 17-37 (LAVRWYGLMYLLGFACFILLG), 57-77 (MLFYGVLGVIVGGRLGHIFFY), 89-109 (IFAVWQGGMSFHGGFLGVIAA), 121-141 (WLVVTDFIAPLVPLGLGAGRI), 174-194 (QLYEFALEGLAFFTLMWIYSA), 200-220 (GAVSGMFLIGYGVFRSFAEFF), and 235-255 (ISMGQWLSLPMILAGVIMLVW). Arg-140 serves as a coordination point for a 1,2-diacyl-sn-glycero-3-phospho-(1'-sn-glycerol).

This sequence belongs to the Lgt family.

It is found in the cell inner membrane. The catalysed reaction is L-cysteinyl-[prolipoprotein] + a 1,2-diacyl-sn-glycero-3-phospho-(1'-sn-glycerol) = an S-1,2-diacyl-sn-glyceryl-L-cysteinyl-[prolipoprotein] + sn-glycerol 1-phosphate + H(+). Its pathway is protein modification; lipoprotein biosynthesis (diacylglyceryl transfer). In terms of biological role, catalyzes the transfer of the diacylglyceryl group from phosphatidylglycerol to the sulfhydryl group of the N-terminal cysteine of a prolipoprotein, the first step in the formation of mature lipoproteins. The protein is Phosphatidylglycerol--prolipoprotein diacylglyceryl transferase of Nitrosospira multiformis (strain ATCC 25196 / NCIMB 11849 / C 71).